The sequence spans 345 residues: Phosphoribosylformylglycinamidine cyclo-ligase (345 aa).

It belongs to the AIR synthase family.

The protein resides in the cytoplasm. The catalysed reaction is 2-formamido-N(1)-(5-O-phospho-beta-D-ribosyl)acetamidine + ATP = 5-amino-1-(5-phospho-beta-D-ribosyl)imidazole + ADP + phosphate + H(+). It functions in the pathway purine metabolism; IMP biosynthesis via de novo pathway; 5-amino-1-(5-phospho-D-ribosyl)imidazole from N(2)-formyl-N(1)-(5-phospho-D-ribosyl)glycinamide: step 2/2. The chain is Phosphoribosylformylglycinamidine cyclo-ligase from Shouchella clausii (strain KSM-K16) (Alkalihalobacillus clausii).